Here is a 625-residue protein sequence, read N- to C-terminus: Putative xanthine/uracil permease C887.17 (625 aa).

10 consecutive transmembrane segments (helical) span residues 49–69 (AGLT…TILV), 107–127 (AAIS…PVGM), 154–174 (EALL…VIGL), 192–212 (AGIG…LGVI), 246–263 (MWVG…LMMY), 328–348 (FAIA…GTLY), 369–389 (VAYI…CSPV), 406–426 (GILG…APIF), 429–449 (IPVW…MKST), and 465–485 (ITIA…AGII). Residues 595-625 (EAVGESESFSNRQQDFRTPYAGIDMDTDDRI) are disordered.

It belongs to the nucleobase:cation symporter-2 (NCS2) (TC 2.A.40) family. Azg-like subfamily.

The protein resides in the golgi apparatus membrane. The chain is Putative xanthine/uracil permease C887.17 from Schizosaccharomyces pombe (strain 972 / ATCC 24843) (Fission yeast).